A 181-amino-acid chain; its full sequence is NADH-quinone oxidoreductase subunit 2 (181 aa).

The [2Fe-2S] cluster site is built by Cys-83, Ser-87, Cys-88, Cys-124, and Cys-128. The cysteines at positions 144 and 172 are disulfide-linked.

This sequence belongs to the complex I 24 kDa subunit family. NDH-1 is composed of 15 different subunits, Nqo1 to Nqo15. The complex has a L-shaped structure, with the hydrophobic arm (subunits Nqo7, Nqo8 and Nqo10 to Nqo14) embedded in the membrane and the hydrophilic peripheral arm (subunits Nqo1 to Nqo6, Nqo9 and Nqo15) protruding into the bacterial cytoplasm. The hydrophilic domain contains all the redox centers. It depends on [2Fe-2S] cluster as a cofactor.

Its subcellular location is the cell membrane. The enzyme catalyses a quinone + NADH + 5 H(+)(in) = a quinol + NAD(+) + 4 H(+)(out). Functionally, NDH-1 shuttles electrons from NADH, via FMN and iron-sulfur (Fe-S) centers, to quinones in the respiratory chain. The immediate electron acceptor for the enzyme in this species is menaquinone. Couples the redox reaction to proton translocation (for every two electrons transferred, four hydrogen ions are translocated across the cytoplasmic membrane), and thus conserves the redox energy in a proton gradient required for the synthesis of ATP. In Thermus thermophilus (strain ATCC 27634 / DSM 579 / HB8), this protein is NADH-quinone oxidoreductase subunit 2 (nqo2).